Here is a 190-residue protein sequence, read N- to C-terminus: Histone-arginine methyltransferase METTL23 (190 aa).

This sequence belongs to the methyltransferase superfamily. METTL23 family. Interacts with HSPA5, HSP90B1, TUBULIN, UGGT1 and UGGT2. Interacts with TET3. Interacts with STPG4.

The protein localises to the nucleus. It is found in the cytoplasm. It catalyses the reaction L-arginyl-[protein] + 2 S-adenosyl-L-methionine = N(omega),N(omega)-dimethyl-L-arginyl-[protein] + 2 S-adenosyl-L-homocysteine + 2 H(+). Its function is as follows. Histone methyltransferase that dimethylates histone H3 at 'Arg-17', forming asymmetric dimethylarginine (H3R17me2a), leading to activate transcription via chromatin remodeling. Maternal factor involved in epigenetic chromatin reprogramming of the paternal genome in the zygote: mediates H3R17me2a, promoting histone H3.3 incorporation in the male pronucleus, leading to TET3 recruitment and subsequent DNA demethylation. This chain is Histone-arginine methyltransferase METTL23, found in Homo sapiens (Human).